Consider the following 892-residue polypeptide: Alanine--tRNA ligase (892 aa).

Zn(2+) contacts are provided by H577, H581, C680, and H684.

Belongs to the class-II aminoacyl-tRNA synthetase family. Zn(2+) is required as a cofactor.

It is found in the cytoplasm. It carries out the reaction tRNA(Ala) + L-alanine + ATP = L-alanyl-tRNA(Ala) + AMP + diphosphate. Catalyzes the attachment of alanine to tRNA(Ala) in a two-step reaction: alanine is first activated by ATP to form Ala-AMP and then transferred to the acceptor end of tRNA(Ala). Also edits incorrectly charged Ser-tRNA(Ala) and Gly-tRNA(Ala) via its editing domain. The polypeptide is Alanine--tRNA ligase (Paenarthrobacter aurescens (strain TC1)).